The primary structure comprises 252 residues: Oil body-associated protein 2A (252 aa).

Positions 1 to 31 (MASSDGKPLPTPASVGGGGGSSTAPPGQPTT) are disordered. Residues 22–31 (STAPPGQPTT) show a composition bias toward low complexity.

The protein belongs to the OBAP family.

This is Oil body-associated protein 2A from Zea mays (Maize).